The chain runs to 382 residues: Queuine tRNA-ribosyltransferase (382 aa).

Residue Asp-96 is the Proton acceptor of the active site. Substrate-binding positions include 96–100 (DSGGF), Asp-151, Gln-194, and Gly-221. The interval 252-258 (GVGAPDS) is RNA binding. Catalysis depends on Asp-271, which acts as the Nucleophile. The interval 276-280 (TRIAR) is RNA binding; important for wobble base 34 recognition. Zn(2+) contacts are provided by Cys-309, Cys-311, Cys-314, and His-340.

This sequence belongs to the queuine tRNA-ribosyltransferase family. As to quaternary structure, homodimer. Within each dimer, one monomer is responsible for RNA recognition and catalysis, while the other monomer binds to the replacement base PreQ1. Zn(2+) serves as cofactor.

It carries out the reaction 7-aminomethyl-7-carbaguanine + guanosine(34) in tRNA = 7-aminomethyl-7-carbaguanosine(34) in tRNA + guanine. Its pathway is tRNA modification; tRNA-queuosine biosynthesis. Its function is as follows. Catalyzes the base-exchange of a guanine (G) residue with the queuine precursor 7-aminomethyl-7-deazaguanine (PreQ1) at position 34 (anticodon wobble position) in tRNAs with GU(N) anticodons (tRNA-Asp, -Asn, -His and -Tyr). Catalysis occurs through a double-displacement mechanism. The nucleophile active site attacks the C1' of nucleotide 34 to detach the guanine base from the RNA, forming a covalent enzyme-RNA intermediate. The proton acceptor active site deprotonates the incoming PreQ1, allowing a nucleophilic attack on the C1' of the ribose to form the product. After dissociation, two additional enzymatic reactions on the tRNA convert PreQ1 to queuine (Q), resulting in the hypermodified nucleoside queuosine (7-(((4,5-cis-dihydroxy-2-cyclopenten-1-yl)amino)methyl)-7-deazaguanosine). This chain is Queuine tRNA-ribosyltransferase, found in Lactococcus lactis subsp. cremoris (strain SK11).